The chain runs to 320 residues: HPr kinase/phosphorylase (320 aa).

Residues H141 and K162 contribute to the active site. 156 to 163 contacts ATP; it reads GHSGLGKS. S163 provides a ligand contact to Mg(2+). D180 serves as the catalytic Proton acceptor; for phosphorylation activity. Proton donor; for dephosphorylation activity. The tract at residues 204–213 is important for the catalytic mechanism of both phosphorylation and dephosphorylation; sequence LEVRGLGILN. Position 205 (E205) interacts with Mg(2+). Residue R248 is part of the active site. Residues 269–274 are important for the catalytic mechanism of dephosphorylation; it reads PVAVGR.

Belongs to the HPrK/P family. Homohexamer. It depends on Mg(2+) as a cofactor.

The enzyme catalyses [HPr protein]-L-serine + ATP = [HPr protein]-O-phospho-L-serine + ADP + H(+). It carries out the reaction [HPr protein]-O-phospho-L-serine + phosphate + H(+) = [HPr protein]-L-serine + diphosphate. Catalyzes the ATP- as well as the pyrophosphate-dependent phosphorylation of a specific serine residue in HPr, a phosphocarrier protein of the phosphoenolpyruvate-dependent sugar phosphotransferase system (PTS). HprK/P also catalyzes the pyrophosphate-producing, inorganic phosphate-dependent dephosphorylation (phosphorolysis) of seryl-phosphorylated HPr (P-Ser-HPr). In Neisseria gonorrhoeae (strain ATCC 700825 / FA 1090), this protein is HPr kinase/phosphorylase.